The sequence spans 86 residues: UPF0457 protein SAUSA300_2132 (86 aa).

Belongs to the UPF0457 family.

The sequence is that of UPF0457 protein SAUSA300_2132 from Staphylococcus aureus (strain USA300).